The sequence spans 93 residues: Small ribosomal subunit protein uS19m (93 aa).

Belongs to the universal ribosomal protein uS19 family. Component of the mitochondrial small ribosomal subunit (mt-SSU). Mature yeast 74S mitochondrial ribosomes consist of a small (37S) and a large (54S) subunit. The 37S small subunit contains a 15S ribosomal RNA (15S mt-rRNA) and at least 32 different proteins. The 54S large subunit contains a 21S rRNA (21S mt-rRNA) and at least 45 different proteins.

Its subcellular location is the mitochondrion. Component of the mitochondrial ribosome (mitoribosome), a dedicated translation machinery responsible for the synthesis of mitochondrial genome-encoded proteins, including at least some of the essential transmembrane subunits of the mitochondrial respiratory chain. The mitoribosomes are attached to the mitochondrial inner membrane and translation products are cotranslationally integrated into the membrane. The protein is Small ribosomal subunit protein uS19m (rsm19) of Schizosaccharomyces pombe (strain 972 / ATCC 24843) (Fission yeast).